Consider the following 487-residue polypeptide: Aspartyl/glutamyl-tRNA(Asn/Gln) amidotransferase subunit B (487 aa).

It belongs to the GatB/GatE family. GatB subfamily. As to quaternary structure, heterotrimer of A, B and C subunits.

The catalysed reaction is L-glutamyl-tRNA(Gln) + L-glutamine + ATP + H2O = L-glutaminyl-tRNA(Gln) + L-glutamate + ADP + phosphate + H(+). It catalyses the reaction L-aspartyl-tRNA(Asn) + L-glutamine + ATP + H2O = L-asparaginyl-tRNA(Asn) + L-glutamate + ADP + phosphate + 2 H(+). In terms of biological role, allows the formation of correctly charged Asn-tRNA(Asn) or Gln-tRNA(Gln) through the transamidation of misacylated Asp-tRNA(Asn) or Glu-tRNA(Gln) in organisms which lack either or both of asparaginyl-tRNA or glutaminyl-tRNA synthetases. The reaction takes place in the presence of glutamine and ATP through an activated phospho-Asp-tRNA(Asn) or phospho-Glu-tRNA(Gln). In Chlamydia abortus (strain DSM 27085 / S26/3) (Chlamydophila abortus), this protein is Aspartyl/glutamyl-tRNA(Asn/Gln) amidotransferase subunit B.